We begin with the raw amino-acid sequence, 266 residues long: Glucosamine-6-phosphate deaminase (266 aa).

The active-site Proton acceptor; for enolization step is Asp-72. Asp-141 (for ring-opening step) is an active-site residue. His-143 functions as the Proton acceptor; for ring-opening step in the catalytic mechanism. The active-site For ring-opening step is the Glu-148.

The protein belongs to the glucosamine/galactosamine-6-phosphate isomerase family. NagB subfamily. In terms of assembly, homohexamer; trimer of disulfide-linked dimers.

It catalyses the reaction alpha-D-glucosamine 6-phosphate + H2O = beta-D-fructose 6-phosphate + NH4(+). The protein operates within amino-sugar metabolism; N-acetylneuraminate degradation; D-fructose 6-phosphate from N-acetylneuraminate: step 5/5. Allosterically activated by N-acetylglucosamine 6-phosphate (GlcNAc6P). Its function is as follows. Catalyzes the reversible isomerization-deamination of glucosamine 6-phosphate (GlcN6P) to form fructose 6-phosphate (Fru6P) and ammonium ion. This Escherichia coli O6:H1 (strain CFT073 / ATCC 700928 / UPEC) protein is Glucosamine-6-phosphate deaminase.